Consider the following 304-residue polypeptide: N-acetyl-D-glucosamine kinase (304 aa).

ATP-binding positions include 4 to 11 (GFDMGGTK) and 133 to 140 (GVGGGLIV). The Zn(2+) site is built by H157, C177, C179, and C184.

Belongs to the ROK (NagC/XylR) family. NagK subfamily.

It carries out the reaction N-acetyl-D-glucosamine + ATP = N-acetyl-D-glucosamine 6-phosphate + ADP + H(+). The protein operates within cell wall biogenesis; peptidoglycan recycling. In terms of biological role, catalyzes the phosphorylation of N-acetyl-D-glucosamine (GlcNAc) derived from cell-wall degradation, yielding GlcNAc-6-P. The chain is N-acetyl-D-glucosamine kinase from Yersinia pseudotuberculosis serotype IB (strain PB1/+).